The following is a 334-amino-acid chain: L-lactate dehydrogenase B chain (334 aa).

Gly-30–Lys-58 provides a ligand contact to NAD(+). Substrate contacts are provided by Arg-107, Asn-139, and Arg-170. NAD(+) is bound at residue Asn-139. His-194 acts as the Proton acceptor in catalysis. Thr-249 lines the substrate pocket.

The protein belongs to the LDH/MDH superfamily. LDH family. Homotetramer.

It localises to the cytoplasm. It catalyses the reaction (S)-lactate + NAD(+) = pyruvate + NADH + H(+). The protein operates within fermentation; pyruvate fermentation to lactate; (S)-lactate from pyruvate: step 1/1. Its function is as follows. Interconverts simultaneously and stereospecifically pyruvate and lactate with concomitant interconversion of NADH and NAD(+). This chain is L-lactate dehydrogenase B chain (ldhb), found in Xenopus laevis (African clawed frog).